Consider the following 610-residue polypeptide: UvrABC system protein C (610 aa).

The GIY-YIG domain occupies 16 to 94 (SQPGVYRMYD…IKLYQPRYNV (79 aa)). The 36-residue stretch at 204-239 (DQVLTQLIARMEKASQDLAFEEAARIRDQIQAVRRV) folds into the UVR domain.

This sequence belongs to the UvrC family. In terms of assembly, interacts with UvrB in an incision complex.

Its subcellular location is the cytoplasm. Its function is as follows. The UvrABC repair system catalyzes the recognition and processing of DNA lesions. UvrC both incises the 5' and 3' sides of the lesion. The N-terminal half is responsible for the 3' incision and the C-terminal half is responsible for the 5' incision. This chain is UvrABC system protein C, found in Salmonella heidelberg (strain SL476).